The primary structure comprises 498 residues: uncharacterized protein (498 aa).

Positions 1–26 (MEESSMAQASLICLLLSFSIIMLSNA) are cleaved as a signal peptide. Residues 27–441 (ADISIDCGSS…GEEKSSSNLA (415 aa)) lie on the Extracellular side of the membrane. N-linked (GlcNAc...) asparagine glycosylation is found at N44, N150, N354, and N357. Residues 351-439 (GSGNGTNSTS…KSGEEKSSSN (89 aa)) are disordered. The segment covering 362 to 414 (SGGGSPSPGGGSGSPPSTGGGSGSPPSTGGGGGSPSKGGGGGKSGGSNNGDGG) has biased composition (gly residues). Residues 418–436 (ASEDEKSADSSGKSGEEKS) are compositionally biased toward basic and acidic residues. The chain crosses the membrane as a helical span at residues 442 to 462 (LPLGISLPTLLSLGAGGWGVW). Topologically, residues 463–498 (KYFIKPRRHPESELPLKQNISLQVNMGNATVVNAGQ) are cytoplasmic.

Its subcellular location is the membrane. This is an uncharacterized protein from Arabidopsis thaliana (Mouse-ear cress).